A 146-amino-acid polypeptide reads, in one-letter code: MTIKTGTRRKSRELALQMLFQMDMGKQSADHVEKTFWAERKDLEEEVRSFAIDLFHVAEKRSEEIDKLIEKHAEHWRMERMAAVDRNILRGACAEFMGFPKTPKPVVINESLEIARRFSSPESVQFINGVLDSVARELDAERKKKS.

This sequence belongs to the NusB family.

Its function is as follows. Involved in transcription antitermination. Required for transcription of ribosomal RNA (rRNA) genes. Binds specifically to the boxA antiterminator sequence of the ribosomal RNA (rrn) operons. The protein is Transcription antitermination protein NusB of Koribacter versatilis (strain Ellin345).